We begin with the raw amino-acid sequence, 245 residues long: Probable phosphatase YcdX (245 aa).

9 residues coordinate Zn(2+): His7, His9, His15, His40, Glu73, His101, His131, Asp192, and His194.

Belongs to the PHP family. Homotrimer. Zn(2+) is required as a cofactor.

The polypeptide is Probable phosphatase YcdX (Escherichia fergusonii (strain ATCC 35469 / DSM 13698 / CCUG 18766 / IAM 14443 / JCM 21226 / LMG 7866 / NBRC 102419 / NCTC 12128 / CDC 0568-73)).